Reading from the N-terminus, the 505-residue chain is Maturase K (505 aa).

It belongs to the intron maturase 2 family. MatK subfamily.

It is found in the plastid. Its subcellular location is the chloroplast. Functionally, usually encoded in the trnK tRNA gene intron. Probably assists in splicing its own and other chloroplast group II introns. The chain is Maturase K from Cubanola domingensis.